We begin with the raw amino-acid sequence, 353 residues long: Photosystem II D2 protein (353 aa).

Thr2 is subject to N-acetylthreonine. Thr2 is modified (phosphothreonine). Residues 41–61 (CAYFALGGWLTGTTFVTSWYT) form a helical membrane-spanning segment. Residue His118 coordinates chlorophyll a. The chain crosses the membrane as a helical span at residues 125 to 141 (GFMLRQFEIARSVQLRP). Positions 130 and 143 each coordinate pheophytin a. Residues 153–166 (VFVSVFLIYPLGQS) traverse the membrane as a helical segment. A chlorophyll a-binding site is contributed by His198. A helical membrane pass occupies residues 208–228 (AALLCAIHGATVENTIFEDGD). Residues His215 and Phe262 each contribute to the a plastoquinone site. His215 serves as a coordination point for Fe cation. His269 provides a ligand contact to Fe cation. Residues 279–295 (GLWMSAVGVVGLAVNLR) form a helical membrane-spanning segment.

This sequence belongs to the reaction center PufL/M/PsbA/D family. PSII is composed of 1 copy each of membrane proteins PsbA, PsbB, PsbC, PsbD, PsbE, PsbF, PsbH, PsbI, PsbJ, PsbK, PsbL, PsbM, PsbT, PsbX, PsbY, PsbZ, Psb30/Ycf12, at least 3 peripheral proteins of the oxygen-evolving complex and a large number of cofactors. It forms dimeric complexes. It depends on The D1/D2 heterodimer binds P680, chlorophylls that are the primary electron donor of PSII, and subsequent electron acceptors. It shares a non-heme iron and each subunit binds pheophytin, quinone, additional chlorophylls, carotenoids and lipids. There is also a Cl(-1) ion associated with D1 and D2, which is required for oxygen evolution. The PSII complex binds additional chlorophylls, carotenoids and specific lipids. as a cofactor.

Its subcellular location is the plastid. It localises to the chloroplast thylakoid membrane. The enzyme catalyses 2 a plastoquinone + 4 hnu + 2 H2O = 2 a plastoquinol + O2. Functionally, photosystem II (PSII) is a light-driven water:plastoquinone oxidoreductase that uses light energy to abstract electrons from H(2)O, generating O(2) and a proton gradient subsequently used for ATP formation. It consists of a core antenna complex that captures photons, and an electron transfer chain that converts photonic excitation into a charge separation. The D1/D2 (PsbA/PsbD) reaction center heterodimer binds P680, the primary electron donor of PSII as well as several subsequent electron acceptors. D2 is needed for assembly of a stable PSII complex. This chain is Photosystem II D2 protein, found in Chaetosphaeridium globosum (Charophycean green alga).